Reading from the N-terminus, the 232-residue chain is Large ribosomal subunit protein uL1 (232 aa).

Belongs to the universal ribosomal protein uL1 family. As to quaternary structure, part of the 50S ribosomal subunit.

Functionally, binds directly to 23S rRNA. The L1 stalk is quite mobile in the ribosome, and is involved in E site tRNA release. In terms of biological role, protein L1 is also a translational repressor protein, it controls the translation of the L11 operon by binding to its mRNA. In Dichelobacter nodosus (strain VCS1703A), this protein is Large ribosomal subunit protein uL1.